The sequence spans 138 residues: Cystatin-11 (138 aa).

A signal peptide spans 1 to 26; that stretch reads MMAEPWQALQLLLAILLTLMALPYQA. 2 disulfide bridges follow: Cys-94/Cys-102 and Cys-115/Cys-135. N-linked (GlcNAc...) asparagine glycosylation occurs at Asn-132.

It belongs to the cystatin family. As to expression, detected in the epithelium and lumen of the epididymis, and in sperm (at protein level).

The protein localises to the secreted. Its function is as follows. Has antibacterial activity against the Gram-negative bacteria E.coli. May play a role in sperm maturation and fertilization. This chain is Cystatin-11 (CST11), found in Homo sapiens (Human).